The following is a 60-amino-acid chain: Pepsin A (60 aa).

Residues 1–45 (FIIKVPLVKKKSLRKNLKEHGLLKDFLKKHSPNPASKYFPQEAAV) constitute a propeptide, activation peptide.

It belongs to the peptidase A1 family.

The protein resides in the secreted. It carries out the reaction Preferential cleavage: hydrophobic, preferably aromatic, residues in P1 and P1' positions. Cleaves 1-Phe-|-Val-2, 4-Gln-|-His-5, 13-Glu-|-Ala-14, 14-Ala-|-Leu-15, 15-Leu-|-Tyr-16, 16-Tyr-|-Leu-17, 23-Gly-|-Phe-24, 24-Phe-|-Phe-25 and 25-Phe-|-Tyr-26 bonds in the B chain of insulin.. In terms of biological role, shows particularly broad specificity; although bonds involving phenylalanine and leucine are preferred, many others are also cleaved to some extent. The protein is Pepsin A (PGA) of Ursus thibetanus (Asiatic black bear).